The sequence spans 216 residues: Uracil phosphoribosyltransferase (216 aa).

Residues Arg-85, Arg-110, and 135 to 143 contribute to the 5-phospho-alpha-D-ribose 1-diphosphate site; that span reads DPMVATGYS. Uracil contacts are provided by residues Ile-200 and 205–207; that span reads GDA. Residue Asp-206 coordinates 5-phospho-alpha-D-ribose 1-diphosphate.

Belongs to the UPRTase family. Requires Mg(2+) as cofactor.

The enzyme catalyses UMP + diphosphate = 5-phospho-alpha-D-ribose 1-diphosphate + uracil. It participates in pyrimidine metabolism; UMP biosynthesis via salvage pathway; UMP from uracil: step 1/1. Its activity is regulated as follows. Allosterically activated by GTP. Functionally, catalyzes the conversion of uracil and 5-phospho-alpha-D-ribose 1-diphosphate (PRPP) to UMP and diphosphate. The chain is Uracil phosphoribosyltransferase from Burkholderia mallei (strain NCTC 10247).